A 214-amino-acid polypeptide reads, in one-letter code: Pyridoxine/pyridoxamine 5'-phosphate oxidase (214 aa).

Residues 9-12 (RKDY) and K67 each bind substrate. Residues 62 to 67 (RMVLLK), 77 to 78 (FT), R83, K84, and Q106 each bind FMN. Substrate-binding residues include Y124, R128, and S132. Residues 141–142 (QS) and W186 contribute to the FMN site. 192–194 (RLH) contacts substrate. Residue R196 participates in FMN binding.

It belongs to the pyridoxamine 5'-phosphate oxidase family. Homodimer. FMN is required as a cofactor.

It carries out the reaction pyridoxamine 5'-phosphate + O2 + H2O = pyridoxal 5'-phosphate + H2O2 + NH4(+). The catalysed reaction is pyridoxine 5'-phosphate + O2 = pyridoxal 5'-phosphate + H2O2. It functions in the pathway cofactor metabolism; pyridoxal 5'-phosphate salvage; pyridoxal 5'-phosphate from pyridoxamine 5'-phosphate: step 1/1. It participates in cofactor metabolism; pyridoxal 5'-phosphate salvage; pyridoxal 5'-phosphate from pyridoxine 5'-phosphate: step 1/1. Its function is as follows. Catalyzes the oxidation of either pyridoxine 5'-phosphate (PNP) or pyridoxamine 5'-phosphate (PMP) into pyridoxal 5'-phosphate (PLP). In Nostoc sp. (strain PCC 7120 / SAG 25.82 / UTEX 2576), this protein is Pyridoxine/pyridoxamine 5'-phosphate oxidase.